Reading from the N-terminus, the 215-residue chain is Cytochrome b6 (215 aa).

A helical membrane pass occupies residues Ile32–Phe52. Residue Cys35 coordinates heme c. The heme b site is built by His86 and His100. 3 helical membrane passes run Ala90–Phe110, Leu116–Tyr136, and Ala186–Ile206. Heme b contacts are provided by His187 and His202.

The protein belongs to the cytochrome b family. PetB subfamily. The 4 large subunits of the cytochrome b6-f complex are cytochrome b6, subunit IV (17 kDa polypeptide, PetD), cytochrome f and the Rieske protein, while the 4 small subunits are PetG, PetL, PetM and PetN. The complex functions as a dimer. It depends on heme b as a cofactor. Requires heme c as cofactor.

Its subcellular location is the plastid. The protein localises to the chloroplast thylakoid membrane. Component of the cytochrome b6-f complex, which mediates electron transfer between photosystem II (PSII) and photosystem I (PSI), cyclic electron flow around PSI, and state transitions. The protein is Cytochrome b6 of Emiliania huxleyi (Coccolithophore).